We begin with the raw amino-acid sequence, 121 residues long: Putative membrane protein insertion efficiency factor (121 aa).

This sequence belongs to the UPF0161 family.

The protein resides in the cell membrane. Its function is as follows. Could be involved in insertion of integral membrane proteins into the membrane. The chain is Putative membrane protein insertion efficiency factor from Rhodococcus opacus (strain B4).